A 408-amino-acid polypeptide reads, in one-letter code: Subtilisin-like protease 6 (408 aa).

The first 20 residues, 1 to 20 (MGFITKAIPIVLAALSTVDG), serve as a signal peptide directing secretion. Positions 21 to 123 (AKILEAGPHA…RDTVVKATAI (103 aa)) are excised as a propeptide. The Inhibitor I9 domain occupies 36–119 (KYIVVMKQDV…DFIERDTVVK (84 aa)). Residues 131–408 (SWGLARVGSK…GKLIYNGSGK (278 aa)) enclose the Peptidase S8 domain. Catalysis depends on charge relay system residues D163 and H194. N-linked (GlcNAc...) asparagine glycosylation is found at N248, N260, and N345. Catalysis depends on S354, which acts as the Charge relay system. N-linked (GlcNAc...) asparagine glycosylation occurs at N404.

This sequence belongs to the peptidase S8 family.

The protein resides in the secreted. Its function is as follows. Secreted subtilisin-like serine protease with keratinolytic activity that contributes to pathogenicity. This is Subtilisin-like protease 6 (SUB6) from Arthroderma gypseum (strain ATCC MYA-4604 / CBS 118893) (Microsporum gypseum).